We begin with the raw amino-acid sequence, 409 residues long: L-cysteine:1D-myo-inositol 2-amino-2-deoxy-alpha-D-glucopyranoside ligase (409 aa).

C25 is a Zn(2+) binding site. Residues 25–28 (CGIT), T40, and 63–65 (NVT) each bind L-cysteinyl-5'-AMP. Residues 27–37 (ITPYDATHIGH) carry the 'HIGH' region motif. The short motif at 179–184 (ERGGDP) is the 'ERGGDP' region element. Residue W219 coordinates L-cysteinyl-5'-AMP. C223 serves as a coordination point for Zn(2+). An L-cysteinyl-5'-AMP-binding site is contributed by 241 to 243 (GSD). A Zn(2+)-binding site is contributed by H248. V274 contributes to the L-cysteinyl-5'-AMP binding site. Positions 280-284 (KMSKS) match the 'KMSKS' region motif.

Belongs to the class-I aminoacyl-tRNA synthetase family. MshC subfamily. In terms of assembly, monomer. Zn(2+) is required as a cofactor.

It carries out the reaction 1D-myo-inositol 2-amino-2-deoxy-alpha-D-glucopyranoside + L-cysteine + ATP = 1D-myo-inositol 2-(L-cysteinylamino)-2-deoxy-alpha-D-glucopyranoside + AMP + diphosphate + H(+). Functionally, catalyzes the ATP-dependent condensation of GlcN-Ins and L-cysteine to form L-Cys-GlcN-Ins. The chain is L-cysteine:1D-myo-inositol 2-amino-2-deoxy-alpha-D-glucopyranoside ligase from Clavibacter sepedonicus (Clavibacter michiganensis subsp. sepedonicus).